The following is a 652-amino-acid chain: Putative glycine--tRNA ligase (652 aa).

The disordered stretch occupies residues 119-145 (GDKEARGQNSNDQPEESDDKKKRKKKV). Position 221 (Glu221) interacts with glycine. ATP contacts are provided by residues 253–255 (RNE) and 264–265 (RV). Residue Glu272 participates in glycine binding. 380 to 381 (EC) is an ATP binding site. 499–501 (EPS) lines the glycine pocket. Arg506 serves as a coordination point for ATP.

Belongs to the class-II aminoacyl-tRNA synthetase family. In terms of assembly, homodimer.

The protein resides in the cytoplasm. It carries out the reaction tRNA(Gly) + glycine + ATP = glycyl-tRNA(Gly) + AMP + diphosphate. It catalyses the reaction 2 ATP + H(+) = P(1),P(4)-bis(5'-adenosyl) tetraphosphate + diphosphate. Its function is as follows. Catalyzes the ATP-dependent ligation of glycine to the 3'-end of its cognate tRNA, via the formation of an aminoacyl-adenylate intermediate (Gly-AMP). Also produces diadenosine tetraphosphate (Ap4A), a universal pleiotropic signaling molecule needed for cell regulation pathways, by direct condensation of 2 ATPs. Thereby, may play a special role in Ap4A homeostasis. This is Putative glycine--tRNA ligase (grs1) from Schizosaccharomyces pombe (strain 972 / ATCC 24843) (Fission yeast).